The following is a 72-amino-acid chain: Translation initiation factor IF-1 (72 aa).

The S1-like domain maps to 1 to 72; the sequence is MSKDDSIEFE…TKGRITYRMK (72 aa).

This sequence belongs to the IF-1 family. In terms of assembly, component of the 30S ribosomal translation pre-initiation complex which assembles on the 30S ribosome in the order IF-2 and IF-3, IF-1 and N-formylmethionyl-tRNA(fMet); mRNA recruitment can occur at any time during PIC assembly.

The protein localises to the cytoplasm. Functionally, one of the essential components for the initiation of protein synthesis. Stabilizes the binding of IF-2 and IF-3 on the 30S subunit to which N-formylmethionyl-tRNA(fMet) subsequently binds. Helps modulate mRNA selection, yielding the 30S pre-initiation complex (PIC). Upon addition of the 50S ribosomal subunit IF-1, IF-2 and IF-3 are released leaving the mature 70S translation initiation complex. The sequence is that of Translation initiation factor IF-1 from Xanthomonas euvesicatoria pv. vesicatoria (strain 85-10) (Xanthomonas campestris pv. vesicatoria).